Consider the following 335-residue polypeptide: Histidinol-phosphate aminotransferase (335 aa).

Lysine 202 is subject to N6-(pyridoxal phosphate)lysine.

The protein belongs to the class-II pyridoxal-phosphate-dependent aminotransferase family. Histidinol-phosphate aminotransferase subfamily. Homodimer. Pyridoxal 5'-phosphate serves as cofactor.

The enzyme catalyses L-histidinol phosphate + 2-oxoglutarate = 3-(imidazol-4-yl)-2-oxopropyl phosphate + L-glutamate. The protein operates within amino-acid biosynthesis; L-histidine biosynthesis; L-histidine from 5-phospho-alpha-D-ribose 1-diphosphate: step 7/9. The chain is Histidinol-phosphate aminotransferase from Thermotoga maritima (strain ATCC 43589 / DSM 3109 / JCM 10099 / NBRC 100826 / MSB8).